A 210-amino-acid polypeptide reads, in one-letter code: MELQLAIDLLNKEEAAELANKVKDYVDIVEIGTPIVINEGLPAVQYLNDNIDGVKVLADLKIMDAADYEVSQAVKFGADVVTILGVAEDASIKGAVEEAHKNGKELLVDMIAVQDLQKRAKELDELGADYIAVHTGYDLQAEGESPLESLRQVKSVINNSKVAVIGGIKPDTIKEVVAEEPDLVVVGGGIANADDPVAAAKACKDAIEGR.

This sequence belongs to the HPS/KGPDC family. HPS subfamily.

It catalyses the reaction D-ribulose 5-phosphate + formaldehyde = D-arabino-hex-3-ulose 6-phosphate. It functions in the pathway one-carbon metabolism; formaldehyde assimilation via RuMP pathway; D-fructose 6-phosphate from D-ribulose 5-phosphate and formaldehyde: step 1/2. Catalyzes the condensation of ribulose 5-phosphate with formaldehyde to form 3-hexulose 6-phosphate. The chain is 3-hexulose-6-phosphate synthase 3 from Staphylococcus saprophyticus subsp. saprophyticus (strain ATCC 15305 / DSM 20229 / NCIMB 8711 / NCTC 7292 / S-41).